We begin with the raw amino-acid sequence, 627 residues long: Interferon-induced GTP-binding protein MxB (627 aa).

The Dynamin-type G domain maps to 34 to 307 (DLALPAIAVI…LVHHIQRSLP (274 aa)). The tract at residues 44-51 (GDQSSGKS) is G1 motif. 44 to 51 (GDQSSGKS) serves as a coordination point for GTP. Residues 69–71 (VTR) are G2 motif. The interval 145 to 148 (DLPG) is G3 motif. Residues 145–149 (DLPGI) and 214–217 (TKPD) contribute to the GTP site. Positions 214–217 (TKPD) are G4 motif. The segment at 246–249 (RCRG) is G5 motif. The region spanning 541 to 627 (LSEMKLHLES…MKAQNLLATY (87 aa)) is the GED domain.

Belongs to the TRAFAC class dynamin-like GTPase superfamily. Dynamin/Fzo/YdjA family.

It is found in the cytoplasm. The chain is Interferon-induced GTP-binding protein MxB (mxb) from Danio rerio (Zebrafish).